A 352-amino-acid chain; its full sequence is Phosphoribosylformylglycinamidine cyclo-ligase (352 aa).

Belongs to the AIR synthase family.

Its subcellular location is the cytoplasm. The catalysed reaction is 2-formamido-N(1)-(5-O-phospho-beta-D-ribosyl)acetamidine + ATP = 5-amino-1-(5-phospho-beta-D-ribosyl)imidazole + ADP + phosphate + H(+). It functions in the pathway purine metabolism; IMP biosynthesis via de novo pathway; 5-amino-1-(5-phospho-D-ribosyl)imidazole from N(2)-formyl-N(1)-(5-phospho-D-ribosyl)glycinamide: step 2/2. In Coxiella burnetii (strain RSA 331 / Henzerling II), this protein is Phosphoribosylformylglycinamidine cyclo-ligase.